An 83-amino-acid chain; its full sequence is Small ribosomal subunit protein bS16 (83 aa).

This sequence belongs to the bacterial ribosomal protein bS16 family.

The polypeptide is Small ribosomal subunit protein bS16 (Pseudomonas fluorescens (strain Pf0-1)).